The primary structure comprises 542 residues: Peptide chain release factor 3 (542 aa).

One can recognise a tr-type G domain in the interval 14-283; that stretch reads ELRRNFAIIS…YFLEYALKPG (270 aa). GTP is bound by residues 23-30, 91-95, and 145-148; these read SHPDAGKT, DTPGH, and NKLD.

It belongs to the TRAFAC class translation factor GTPase superfamily. Classic translation factor GTPase family. PrfC subfamily.

It is found in the cytoplasm. Functionally, increases the formation of ribosomal termination complexes and stimulates activities of RF-1 and RF-2. It binds guanine nucleotides and has strong preference for UGA stop codons. It may interact directly with the ribosome. The stimulation of RF-1 and RF-2 is significantly reduced by GTP and GDP, but not by GMP. This is Peptide chain release factor 3 from Nostoc punctiforme (strain ATCC 29133 / PCC 73102).